The chain runs to 423 residues: Glucose-1-phosphate adenylyltransferase (423 aa).

Alpha-D-glucose 1-phosphate is bound by residues Tyr110, Gly175, 190–191 (EK), and Ser208.

This sequence belongs to the bacterial/plant glucose-1-phosphate adenylyltransferase family. Homotetramer.

The enzyme catalyses alpha-D-glucose 1-phosphate + ATP + H(+) = ADP-alpha-D-glucose + diphosphate. The protein operates within glycan biosynthesis; glycogen biosynthesis. Functionally, involved in the biosynthesis of ADP-glucose, a building block required for the elongation reactions to produce glycogen. Catalyzes the reaction between ATP and alpha-D-glucose 1-phosphate (G1P) to produce pyrophosphate and ADP-Glc. This is Glucose-1-phosphate adenylyltransferase from Nitrosococcus oceani (strain ATCC 19707 / BCRC 17464 / JCM 30415 / NCIMB 11848 / C-107).